The chain runs to 589 residues: uncharacterized protein (589 aa).

The RRM domain maps to T242–P314. Disordered regions lie at residues P322–A348, E443–N465, and T566–R589. S330 carries the post-translational modification Phosphoserine. Residues S330–E340 are compositionally biased toward low complexity. T332 bears the Phosphothreonine mark. S334 bears the Phosphoserine mark. Over residues T566 to M579 the composition is skewed to polar residues.

It is found in the nucleus. This is an uncharacterized protein from Schizosaccharomyces pombe (strain 972 / ATCC 24843) (Fission yeast).